Here is a 215-residue protein sequence, read N- to C-terminus: Protein ERP2 (215 aa).

An N-terminal signal peptide occupies residues 1–25 (MIKSTIALPSFFIVLILALVNSVAA). Topologically, residues 26–182 (SSSYAPVAIS…TVNSTESRLT (157 aa)) are lumenal. Positions 41-123 (KECLYYDMVT…LKKVEITLEK (83 aa)) constitute a GOLD domain. Residues 183–203 (WLSILIIIIIAVISIAQVLLI) form a helical membrane-spanning segment. Residues 204-215 (QFLFTGRQKNYV) are Cytoplasmic-facing.

This sequence belongs to the EMP24/GP25L family. As to quaternary structure, associates with EMP24, ERV25 and ERP1.

It localises to the endoplasmic reticulum membrane. In terms of biological role, involved in vesicular protein trafficking. The protein is Protein ERP2 (ERP2) of Saccharomyces cerevisiae (strain ATCC 204508 / S288c) (Baker's yeast).